We begin with the raw amino-acid sequence, 491 residues long: UDP-N-acetylmuramoyl-L-alanyl-D-glutamate--2,6-diaminopimelate ligase (491 aa).

A UDP-N-acetyl-alpha-D-muramoyl-L-alanyl-D-glutamate-binding site is contributed by Ser30. 108-114 (GTNGKTT) is an ATP binding site. Residues Asn149, 150–151 (TT), Ser177, Gln183, and Arg185 contribute to the UDP-N-acetyl-alpha-D-muramoyl-L-alanyl-D-glutamate site. Lys217 bears the N6-carboxylysine mark. Residues Arg383, 407–410 (DNPR), Gly458, and Glu462 each bind meso-2,6-diaminopimelate. The Meso-diaminopimelate recognition motif signature appears at 407-410 (DNPR).

This sequence belongs to the MurCDEF family. MurE subfamily. It depends on Mg(2+) as a cofactor. Carboxylation is probably crucial for Mg(2+) binding and, consequently, for the gamma-phosphate positioning of ATP.

The protein localises to the cytoplasm. The enzyme catalyses UDP-N-acetyl-alpha-D-muramoyl-L-alanyl-D-glutamate + meso-2,6-diaminopimelate + ATP = UDP-N-acetyl-alpha-D-muramoyl-L-alanyl-gamma-D-glutamyl-meso-2,6-diaminopimelate + ADP + phosphate + H(+). It participates in cell wall biogenesis; peptidoglycan biosynthesis. Its function is as follows. Catalyzes the addition of meso-diaminopimelic acid to the nucleotide precursor UDP-N-acetylmuramoyl-L-alanyl-D-glutamate (UMAG) in the biosynthesis of bacterial cell-wall peptidoglycan. This is UDP-N-acetylmuramoyl-L-alanyl-D-glutamate--2,6-diaminopimelate ligase from Listeria monocytogenes serovar 1/2a (strain ATCC BAA-679 / EGD-e).